The sequence spans 120 residues: Succinate dehydrogenase membrane anchor subunit (120 aa).

The Mitochondrial matrix segment spans residues 1-17; the sequence is MTEKLLHFIRTKSGSMH. Residues 18 to 38 traverse the membrane as a helical segment; it reads WWLQRFLAILLAPIILYLLFD. The Mitochondrial intermembrane portion of the chain corresponds to 39–63; sequence VAIYIGQQSDPTVMMFLNRIFNHNS. Residues 64–85 form a helical membrane-spanning segment; sequence IFIFITSVILIWHVRGGMEVII. Histidine 76 is a heme binding site. The Mitochondrial matrix segment spans residues 86–95; that stretch reads EDYVHGEKTR. An a ubiquinone-binding site is contributed by tyrosine 88. Residues 96–120 form a helical membrane-spanning segment; sequence IVSIFLIRVIAIEIMEYLYKCSIIF.

In terms of assembly, part of an enzyme complex containing four subunits: a flavoprotein, an iron-sulfur protein, plus two membrane-anchoring proteins. Heme serves as cofactor.

It is found in the mitochondrion inner membrane. Its pathway is carbohydrate metabolism; tricarboxylic acid cycle. Membrane-anchoring subunit of succinate dehydrogenase (SDH). The chain is Succinate dehydrogenase membrane anchor subunit (SDH4) from Reclinomonas americana.